Reading from the N-terminus, the 131-residue chain is uncharacterized protein (131 aa).

Over residues 31–40 (AAATSRAAPL) the composition is skewed to low complexity. The interval 31 to 131 (AAATSRAAPL…EAKTEQTKTP (101 aa)) is disordered.

This is an uncharacterized protein from Homo sapiens (Human).